Here is a 125-residue protein sequence, read N- to C-terminus: Small ribosomal subunit protein eS6 (125 aa).

This sequence belongs to the eukaryotic ribosomal protein eS6 family.

This is Small ribosomal subunit protein eS6 from Thermococcus onnurineus (strain NA1).